A 572-amino-acid polypeptide reads, in one-letter code: MFS-type transporter pydD (572 aa).

The segment covering 1–15 (MLQEDKSSETMHDPS) has biased composition (basic and acidic residues). Residues 1–46 (MLQEDKSSETMHDPSTRGVETRNVTAVDSPLETATTSESPETERTN) form a disordered region. Residue asparagine 23 is glycosylated (N-linked (GlcNAc...) asparagine). A compositionally biased stretch (low complexity) spans 29–39 (SPLETATTSES). Transmembrane regions (helical) follow at residues 56-76 (FWAL…EGTI), 88-108 (LGGG…MTAM), 123-143 (WPML…GGAT), 156-176 (GIGA…VVPL), 185-205 (IVMG…GLIV), 212-232 (WTFY…FSFL), 255-275 (ALFV…GSVY), and 282-302 (VLVP…FEGS). The N-linked (GlcNAc...) asparagine glycan is linked to asparagine 317. The next 6 membrane-spanning stretches (helical) occupy residues 321-341 (VGVM…LYFM), 358-378 (VQIL…GFLM), 386-406 (PIHY…SLLD), 419-439 (IVYS…LLAP), 451-471 (TWSF…AAVF), and 529-549 (WLVS…AREV).

Belongs to the major facilitator superfamily.

It localises to the membrane. Its function is as follows. MFS-type transporter; part of the gene cluster that mediates the biosynthesis of pyrrocidines, fungal natural products containing a macrocyclic para-cyclophane connected to a decahydrofluorene ring system that show potent antibiotic activities toward Gram-negative bacteria. In Acremonium sp, this protein is MFS-type transporter pydD.